We begin with the raw amino-acid sequence, 62 residues long: Large ribosomal subunit protein bL32 (62 aa).

Positions 1 to 18 (MGVPKKRTSKMRRDRRRA) are enriched in basic residues. Positions 1 to 22 (MGVPKKRTSKMRRDRRRAANNN) are disordered.

Belongs to the bacterial ribosomal protein bL32 family.

In Myxococcus xanthus (strain DK1622), this protein is Large ribosomal subunit protein bL32.